Consider the following 856-residue polypeptide: Alginate lyase 7 (856 aa).

PbH1 repeat units follow at residues aspartate 133–glutamate 155, threonine 157–phenylalanine 179, glutamine 180–threonine 202, serine 204–arginine 226, valine 234–methionine 256, serine 257–glycine 279, valine 280–valine 304, and threonine 320–glutamate 342. 9 Hemolysin-type calcium-binding repeats span residues glycine 387–leucine 402, valine 404–leucine 421, glutamate 422–phenylalanine 439, glycine 538–alanine 549, leucine 554–leucine 563, glycine 565–leucine 581, asparagine 582–phenylalanine 599, glycine 715–leucine 731, and glycine 733–phenylalanine 749.

It belongs to the D-mannuronate C5-epimerase family. Requires Ca(2+) as cofactor.

Its subcellular location is the secreted. The catalysed reaction is Eliminative cleavage of alginate to give oligosaccharides with 4-deoxy-alpha-L-erythro-hex-4-enuronosyl groups at their non-reducing ends and beta-D-mannuronate at their reducing end.. The enzyme catalyses [(1-&gt;4)-beta-D-mannuronosyl](n) = [alginate](n). The protein operates within glycan biosynthesis; alginate biosynthesis. Inhibited by zinc. In terms of biological role, converts beta-D-mannuronic acid (M) to alpha-L-guluronic acid (G). Has both epimerase and lyase activities. Contributes to abortive encystment by degrading the coat from inside the cyst. Important for cyst germination. The sequence is that of Alginate lyase 7 from Azotobacter vinelandii.